Reading from the N-terminus, the 429-residue chain is UDP-N-acetylglucosamine 1-carboxyvinyltransferase (429 aa).

22 to 23 (KN) is a binding site for phosphoenolpyruvate. Arg102 serves as a coordination point for UDP-N-acetyl-alpha-D-glucosamine. Cys126 serves as the catalytic Proton donor. At Cys126 the chain carries 2-(S-cysteinyl)pyruvic acid O-phosphothioketal. UDP-N-acetyl-alpha-D-glucosamine contacts are provided by residues 131-135 (RPVDL), Asp316, and Ile338.

Belongs to the EPSP synthase family. MurA subfamily.

The protein localises to the cytoplasm. The catalysed reaction is phosphoenolpyruvate + UDP-N-acetyl-alpha-D-glucosamine = UDP-N-acetyl-3-O-(1-carboxyvinyl)-alpha-D-glucosamine + phosphate. The protein operates within cell wall biogenesis; peptidoglycan biosynthesis. Its function is as follows. Cell wall formation. Adds enolpyruvyl to UDP-N-acetylglucosamine. This chain is UDP-N-acetylglucosamine 1-carboxyvinyltransferase, found in Afipia carboxidovorans (strain ATCC 49405 / DSM 1227 / KCTC 32145 / OM5) (Oligotropha carboxidovorans).